The sequence spans 275 residues: Shikimate dehydrogenase (NADP(+)) (275 aa).

Shikimate contacts are provided by residues 16 to 18 (SKS) and Thr-63. Catalysis depends on Lys-67, which acts as the Proton acceptor. Asn-88 and Asp-104 together coordinate shikimate. Residues 129–133 (GAGGA), 153–158 (NRTVAR), and Met-219 each bind NADP(+). Tyr-221 serves as a coordination point for shikimate. Gly-243 provides a ligand contact to NADP(+).

This sequence belongs to the shikimate dehydrogenase family. Homodimer.

It carries out the reaction shikimate + NADP(+) = 3-dehydroshikimate + NADPH + H(+). Its pathway is metabolic intermediate biosynthesis; chorismate biosynthesis; chorismate from D-erythrose 4-phosphate and phosphoenolpyruvate: step 4/7. Functionally, involved in the biosynthesis of the chorismate, which leads to the biosynthesis of aromatic amino acids. Catalyzes the reversible NADPH linked reduction of 3-dehydroshikimate (DHSA) to yield shikimate (SA). The sequence is that of Shikimate dehydrogenase (NADP(+)) from Marinobacter nauticus (strain ATCC 700491 / DSM 11845 / VT8) (Marinobacter aquaeolei).